The chain runs to 210 residues: Uracil phosphoribosyltransferase (210 aa).

5-phospho-alpha-D-ribose 1-diphosphate is bound by residues Arg-78, Arg-103, and 130–138 (DPMLATGGT). Residues Ile-193 and 198 to 200 (GDA) contribute to the uracil site. Asp-199 is a binding site for 5-phospho-alpha-D-ribose 1-diphosphate.

The protein belongs to the UPRTase family. Mg(2+) serves as cofactor.

It catalyses the reaction UMP + diphosphate = 5-phospho-alpha-D-ribose 1-diphosphate + uracil. It functions in the pathway pyrimidine metabolism; UMP biosynthesis via salvage pathway; UMP from uracil: step 1/1. With respect to regulation, allosterically activated by GTP. Catalyzes the conversion of uracil and 5-phospho-alpha-D-ribose 1-diphosphate (PRPP) to UMP and diphosphate. This is Uracil phosphoribosyltransferase from Xanthomonas campestris pv. campestris (strain 8004).